Consider the following 802-residue polypeptide: Valine--tRNA ligase (802 aa).

The 'HIGH' region motif lies at 45-55 (PTISGQLHIGH). Residues 524 to 528 (KMSKS) carry the 'KMSKS' region motif. Position 527 (Lys527) interacts with ATP.

Belongs to the class-I aminoacyl-tRNA synthetase family. ValS type 2 subfamily. As to quaternary structure, monomer.

It is found in the cytoplasm. The enzyme catalyses tRNA(Val) + L-valine + ATP = L-valyl-tRNA(Val) + AMP + diphosphate. Functionally, catalyzes the attachment of valine to tRNA(Val). As ValRS can inadvertently accommodate and process structurally similar amino acids such as threonine, to avoid such errors, it has a 'posttransfer' editing activity that hydrolyzes mischarged Thr-tRNA(Val) in a tRNA-dependent manner. The chain is Valine--tRNA ligase from Ehrlichia canis (strain Jake).